A 262-amino-acid chain; its full sequence is Putative hydro-lyase RHA1_ro03475 (262 aa).

Belongs to the D-glutamate cyclase family.

The protein is Putative hydro-lyase RHA1_ro03475 of Rhodococcus jostii (strain RHA1).